The chain runs to 427 residues: Interferon regulatory factor 3 (427 aa).

Thr3 bears the Phosphothreonine mark. Residues 5–111 (KPRILPWLVS…DPHKIYEFVN (107 aa)) constitute a DNA-binding region (IRF tryptophan pentad repeat). Position 14 is a phosphoserine (Ser14). Thr75 is subject to Phosphothreonine. Basic and acidic residues predominate over residues 91-107 (RLAEDRSKDPHDPHKIY). The interval 91–136 (RLAEDRSKDPHDPHKIYEFVNSGVGDFSQPDTSPDTNGGGSTSDTQ) is disordered. Ser97 and Ser123 each carry phosphoserine. Residues 139-149 (ILDELLGNMVL) carry the Nuclear export signal motif. The segment at 141-427 (DELLGNMVLA…GMDFQGPGES (287 aa)) is mediates interaction with ZDHHC11. Position 175 is a (Microbial infection) Phosphoserine (Ser175). Thr180 bears the Phosphothreonine mark. Phosphoserine is present on Ser188. Residue Lys193 forms a Glycyl lysine isopeptide (Lys-Gly) (interchain with G-Cter in ISG15) linkage. The tract at residues 200-360 (EEWEFEVTAF…SWPQDQPWTK (161 aa)) is interaction with HERC5. Phosphothreonine occurs at positions 237, 244, and 253. Cysteines 267 and 289 form a disulfide. Glycyl lysine isopeptide (Lys-Gly) (interchain with G-Cter in ISG15) cross-links involve residues Lys360 and Lys366. Residue Lys366 is modified to N6-acetyllysine. A Phosphoserine modification is found at Ser385. Ser386 carries the post-translational modification Diphosphoserine. Ser386 is modified (phosphoserine; by TBK1). Ser396 carries the phosphoserine; by IKKE and TBK1 modification. Ser398 carries the post-translational modification Phosphoserine. Thr404 carries the post-translational modification Phosphothreonine. The residue at position 427 (Ser427) is a Phosphoserine.

It belongs to the IRF family. As to quaternary structure, monomer. Homodimer; phosphorylation-induced. Interacts (when phosphorylated) with CREBBP. Interacts with MAVS (via phosphorylated pLxIS motif). Interacts with TICAM1 (via phosphorylated pLxIS motif). Interacts with STING1 (via phosphorylated pLxIS motif). Interacts with IKBKE and TBK1. Interacts with TICAM2. Interacts with RBCK1. Interacts with HERC5. Interacts with DDX3X (phosphorylated at 'Ser-102'); the interaction allows the phosphorylation and activation of IRF3 by IKBKE. Interacts with TRIM21 and ULK1, in the presence of TRIM21; this interaction leads to IRF3 degradation by autophagy. Interacts with RIOK3; RIOK3 probably mediates the interaction of TBK1 with IRF3. Interacts with ILRUN; the interaction inhibits IRF3 binding to its DNA consensus sequence. Interacts with LYAR; this interaction impairs IRF3 DNA-binding activity. Interacts with TRAF3. Interacts with ZDHHC11; ZDHHC11 recruits IRF3 to STING1 upon DNA virus infection and thereby promotes IRF3 activation. Interacts with HSP90AA1; the interaction mediates IRF3 association with TOMM70. Interacts with BCL2; the interaction decreases upon Sendai virus infection. Interacts with BAX; the interaction is direct, increases upon Sendai virus infection and mediates the formation of the apoptosis complex TOMM70:HSP90AA1:IRF3:BAX. Interacts with DDX56. Interacts with NBR1. In terms of assembly, (Microbial infection) Interacts with rotavirus A NSP1 (via pLxIS motif); this interaction leads to the proteasome-dependent degradation of IRF3. (Microbial infection) Interacts with herpes virus 8/HHV-8 protein VIRF1. As to quaternary structure, (Microbial infection) Interacts with Seneca Valley virus protease 3C; this interaction is involved in the suppression of IRF3 expression and phosphorylation by the virus. In terms of assembly, (Microbial infection) Interacts with herpes virus 2/HHV-2 protein ICP27; this interaction inhibits IRF3 phosphorylation and nuclear translocation. (Microbial infection) Interacts with human cytomegalovirus protein UL44; this interaction prevents IRF3 binding to its promoters. As to quaternary structure, (Microbial infection) Interacts with the two fragments of MERS-COV protein N produced by CASP6 through proteolytic cleavage; both interactions inhibit IRF3 nuclear translocation after activation and IFN signaling. Constitutively phosphorylated on many Ser/Thr residues. Activated following phosphorylation by TBK1 and IKBKE. Innate adapter proteins, such as MAVS, STING1 or TICAM1, are first activated by viral RNA, cytosolic DNA, and bacterial lipopolysaccharide (LPS), respectively, leading to activation of the kinases TBK1 and IKBKE. These kinases then phosphorylate the adapter proteins on the pLxIS motif, leading to recruitment of IRF3, thereby licensing IRF3 for phosphorylation by TBK1. Phosphorylation at Ser-386 is followed by pyrophosphorylation at the same residue, promoting phosphorylation at Ser-396. Phosphorylated IRF3 dissociates from the adapter proteins, dimerizes, and then enters the nucleus to induce IFNs. Post-translationally, pyrophosphorylated by UAP1 following phosphorylation at Ser-386 by TBK1. Pyrophosphorylation promotes subsequent phosphorylation at Ser-396, leading to homodimerization of IRF3. In terms of processing, acetylation at Lys-366 by KAT8 inhibits recruimtent to promoters and transcription factor activity. Acetylation by KAT8 is promoted by phosphorylation at Ser-396. Ubiquitinated; ubiquitination involves RBCK1 leading to proteasomal degradation. Polyubiquitinated; ubiquitination involves TRIM21 leading to proteasomal degradation. Ubiquitinated by UBE3C, leading to its degradation. Deubiquitinated by USP5 on both 'Lys-48'-linked unanchored and 'Lys-63'-linked anchored polyubiquitin, leading to inhibition of anti-RNA viral innate immunity. Post-translationally, ISGylated by HERC5 resulting in sustained IRF3 activation and in the inhibition of IRF3 ubiquitination by disrupting PIN1 binding. The phosphorylation state of IRF3 does not alter ISGylation. In terms of processing, proteolytically cleaved by apoptotic caspases during apoptosis, leading to its inactivation. Cleavage by CASP3 during virus-induced apoptosis inactivates it, preventing cytokine overproduction. (Microbial infection) ISGylated. ISGylation is cleaved and removed by SARS-COV-2 nsp3 which attenuates type I interferon responses. Post-translationally, (Microbial infection) Phosphorylation and subsequent activation of IRF3 is inhibited by vaccinia virus protein E3. In terms of processing, (Microbial infection) Phosphorylated by herpes simplex virus 1/HHV-1 US3 at Ser-175 to prevent IRF3 activation. As to expression, expressed constitutively in a variety of tissues.

It is found in the cytoplasm. Its subcellular location is the nucleus. The protein localises to the mitochondrion. With respect to regulation, in the absence of viral infection, maintained as a monomer in an autoinhibited state. Phosphorylation by TBK1 and IKBKE disrupts this autoinhibition leading to the liberation of the DNA-binding and dimerization activities and its nuclear localization where it can activate type I IFN and ISG genes. Phosphorylation and activation follow the following steps: innate adapter proteins, such as MAVS, STING1 or TICAM1, are first activated by viral RNA, cytosolic DNA and bacterial lipopolysaccharide (LPS), respectively, leading to activation of the kinases TBK1 and IKBKE. These kinases then phosphorylate the adapter proteins on their pLxIS motif, leading to recruitment of IRF3, thereby licensing IRF3 for phosphorylation by TBK1. Phosphorylated IRF3 dissociates from the adapter proteins, dimerizes, and then enters the nucleus to induce IFNs. Its activity is regulated as follows. (Microbial infection) Activated upon coronavirus SARS-CoV-2 infection. Functionally, key transcriptional regulator of type I interferon (IFN)-dependent immune responses which plays a critical role in the innate immune response against DNA and RNA viruses. Regulates the transcription of type I IFN genes (IFN-alpha and IFN-beta) and IFN-stimulated genes (ISG) by binding to an interferon-stimulated response element (ISRE) in their promoters. Acts as a more potent activator of the IFN-beta (IFNB) gene than the IFN-alpha (IFNA) gene and plays a critical role in both the early and late phases of the IFNA/B gene induction. Found in an inactive form in the cytoplasm of uninfected cells and following viral infection, double-stranded RNA (dsRNA), or toll-like receptor (TLR) signaling, is phosphorylated by IKBKE and TBK1 kinases. This induces a conformational change, leading to its dimerization and nuclear localization and association with CREB binding protein (CREBBP) to form dsRNA-activated factor 1 (DRAF1), a complex which activates the transcription of the type I IFN and ISG genes. Can activate distinct gene expression programs in macrophages and can induce significant apoptosis in primary macrophages. In response to Sendai virus infection, is recruited by TOMM70:HSP90AA1 to mitochondrion and forms an apoptosis complex TOMM70:HSP90AA1:IRF3:BAX inducing apoptosis. Key transcription factor regulating the IFN response during SARS-CoV-2 infection. In Homo sapiens (Human), this protein is Interferon regulatory factor 3.